The primary structure comprises 230 residues: Small ribosomal subunit protein uS3c (230 aa).

The 71-residue stretch at 39–109 (IRSFIHGKLS…QIRVNVVEIS (71 aa)) folds into the KH type-2 domain.

It belongs to the universal ribosomal protein uS3 family. In terms of assembly, part of the 30S ribosomal subunit.

It is found in the plastid. It localises to the chloroplast. The sequence is that of Small ribosomal subunit protein uS3c (rps3) from Porphyra purpurea (Red seaweed).